Reading from the N-terminus, the 166-residue chain is Large ribosomal subunit protein uL10 (166 aa).

It belongs to the universal ribosomal protein uL10 family. As to quaternary structure, part of the ribosomal stalk of the 50S ribosomal subunit. The N-terminus interacts with L11 and the large rRNA to form the base of the stalk. The C-terminus forms an elongated spine to which L12 dimers bind in a sequential fashion forming a multimeric L10(L12)X complex.

In terms of biological role, forms part of the ribosomal stalk, playing a central role in the interaction of the ribosome with GTP-bound translation factors. The sequence is that of Large ribosomal subunit protein uL10 from Ureaplasma urealyticum serovar 10 (strain ATCC 33699 / Western).